Consider the following 488-residue polypeptide: Serine protease HTR4 (488 aa).

A signal peptide spans 1-35 (MSRSKMSSQRLWAVRAQFLLLWLLLWAAPVPWAEA). The IGFBP N-terminal domain maps to 40–118 (VSLPCPDACD…RAWLGTCGCA (79 aa)). 6 disulfide bridges follow: Cys-44–Cys-70, Cys-48–Cys-72, Cys-53–Cys-73, Cys-59–Cys-76, Cys-84–Cys-98, and Cys-92–Cys-115. The serine protease stretch occupies residues 213-373 (GSGFIVSEDG…IPSDRIRQFL (161 aa)). Residues His-229, Asp-259, and Ser-337 each act as charge relay system in the active site. Residues 384-476 (KAPLQKKYLG…LSIIVLRGSQ (93 aa)) enclose the PDZ domain.

This sequence belongs to the peptidase S1C family.

The protein resides in the secreted. In terms of biological role, serine protease. In Rattus norvegicus (Rat), this protein is Serine protease HTR4 (Htra4).